Consider the following 334-residue polypeptide: F-box protein AUF1 (334 aa).

Residues 1–49 (MDAFDAIPDPVVIDILNRVGDVKTLIRCRSVSKRFNSLATQSESLLLQL) form the F-box domain.

As to quaternary structure, part of a SCF (ASK-cullin-F-box) protein ligase complex. Interacts with SKP1A/ASK1, SKP1B/ASK2, ASK11 and ASK13.

The protein resides in the nucleus. It participates in protein modification; protein ubiquitination. Component of SCF(ASK-cullin-F-box) E3 ubiquitin ligase complexes, which may mediate the ubiquitination and subsequent proteasomal degradation of target proteins. Involved in the control of basipetal and acropetal auxin transport by promoting the distribution and expression of the auxin transporter PIN2. Promotes cytokinin-mediated cell expansion in the root elongation and differentiation zone, without affecting root cell division. This is F-box protein AUF1 from Arabidopsis thaliana (Mouse-ear cress).